The sequence spans 197 residues: Dermorphin-1 (197 aa).

A signal peptide spans 1-20; sequence MSFLKKSLLLILFLGLVSLS. Positions 21–45 are excised as a propeptide; sequence VCKEEKRETEEENENEENHEEGSEM. The tract at residues 24-197 is disordered; that stretch reads EEKRETEEEN…GYPSGEAKKM (174 aa). Residues 30 to 39 show a composition bias toward acidic residues; it reads EEENENEENH. Positions 40–62 are enriched in basic and acidic residues; it reads EEGSEMKRYMFHLMDGEAKKRDS. Residue methionine 49 is modified to D-methionine. Aspartate 54 is modified (aspartic acid 1-amide). The propeptide occupies 56–77; that stretch reads EAKKRDSEENEIEENHEEGSEM. The residue at position 81 (alanine 81) is a D-alanine (Ala). Serine 86 is modified (serine amide). The span at 88 to 97 shows a compositional bias: basic and acidic residues; sequence EAKKIKRVSE. The propeptide occupies 88–112; sequence EAKKIKRVSEEENENEENHEEGSEM. Alanine 116 is modified (D-alanine (Ala)). Serine 121 bears the Serine amide mark. A compositionally biased stretch (basic and acidic residues) spans 123–132; that stretch reads EAKKIKRESE. A propeptide spanning residues 123–147 is cleaved from the precursor; the sequence is EAKKIKRESEEEKEIEENHEEGSEM. Alanine 151 carries the post-translational modification D-alanine (Ala). Serine 156 bears the Serine amide mark. A propeptide spanning residues 158-182 is cleaved from the precursor; the sequence is EAKKIKRESEEENENEENHEEGSEM. Residues 167–176 are compositionally biased toward acidic residues; it reads EEENENEENH. Alanine 186 carries the post-translational modification D-alanine (Ala). Serine 191 carries the serine amide modification. A propeptide spanning residues 193 to 197 is cleaved from the precursor; the sequence is EAKKM.

Belongs to the frog skin active peptide (FSAP) family. Dermorphin subfamily. Expressed by the skin glands.

Its subcellular location is the secreted. Dermorphin has a very potent opiate-like activity. It has high affinity and selectivity for mu-type opioid receptors. Its function is as follows. Deltorphin has a very potent opiate-like activity. It has high affinity and selectivity for delta-type opioid receptors. The sequence is that of Dermorphin-1 from Phyllomedusa sauvagei (Sauvage's leaf frog).